Consider the following 360-residue polypeptide: Phenylalanine--tRNA ligase alpha subunit (360 aa).

Glu-260 is a binding site for Mg(2+).

This sequence belongs to the class-II aminoacyl-tRNA synthetase family. Phe-tRNA synthetase alpha subunit type 1 subfamily. Tetramer of two alpha and two beta subunits. Mg(2+) serves as cofactor.

The protein localises to the cytoplasm. The catalysed reaction is tRNA(Phe) + L-phenylalanine + ATP = L-phenylalanyl-tRNA(Phe) + AMP + diphosphate + H(+). The sequence is that of Phenylalanine--tRNA ligase alpha subunit from Rhizobium rhizogenes (strain K84 / ATCC BAA-868) (Agrobacterium radiobacter).